The chain runs to 205 residues: Orotate phosphoribosyltransferase (205 aa).

116–124 (EDIITTGGS) contacts 5-phospho-alpha-D-ribose 1-diphosphate. Orotate-binding residues include threonine 120 and arginine 148.

This sequence belongs to the purine/pyrimidine phosphoribosyltransferase family. PyrE subfamily. In terms of assembly, homodimer. Mg(2+) is required as a cofactor.

The enzyme catalyses orotidine 5'-phosphate + diphosphate = orotate + 5-phospho-alpha-D-ribose 1-diphosphate. The protein operates within pyrimidine metabolism; UMP biosynthesis via de novo pathway; UMP from orotate: step 1/2. Functionally, catalyzes the transfer of a ribosyl phosphate group from 5-phosphoribose 1-diphosphate to orotate, leading to the formation of orotidine monophosphate (OMP). The polypeptide is Orotate phosphoribosyltransferase (Wolinella succinogenes (strain ATCC 29543 / DSM 1740 / CCUG 13145 / JCM 31913 / LMG 7466 / NCTC 11488 / FDC 602W) (Vibrio succinogenes)).